The primary structure comprises 79 residues: UPF0154 protein lwe1321 (79 aa).

The chain crosses the membrane as a helical span at residues tryptophan 2–isoleucine 22. Positions lysine 57–asparagine 66 are enriched in polar residues. Residues lysine 57–lysine 79 form a disordered region.

The protein belongs to the UPF0154 family.

Its subcellular location is the cell membrane. The sequence is that of UPF0154 protein lwe1321 from Listeria welshimeri serovar 6b (strain ATCC 35897 / DSM 20650 / CCUG 15529 / CIP 8149 / NCTC 11857 / SLCC 5334 / V8).